The sequence spans 236 residues: UPF0257 lipoprotein YnfC (236 aa).

Positions 1–16 are cleaved as a signal peptide; sequence MKYKLLPCLLAILLTG. Cys17 carries the N-palmitoyl cysteine lipid modification. The S-diacylglycerol cysteine moiety is linked to residue Cys17.

The protein belongs to the UPF0257 family.

Its subcellular location is the cell membrane. This is UPF0257 lipoprotein YnfC from Escherichia coli O157:H7.